We begin with the raw amino-acid sequence, 128 residues long: Gastrotropin (128 aa).

At Ala2 the chain carries N-acetylalanine.

This sequence belongs to the calycin superfamily. Fatty-acid binding protein (FABP) family.

It is found in the cytoplasm. Its subcellular location is the membrane. In terms of biological role, binds to bile acids and is involved in enterohepatic bile acid metabolism. Required for efficient apical to basolateral transport of conjugated bile acids in ileal enterocytes. Stimulates gastric acid and pepsinogen secretion. In Bos taurus (Bovine), this protein is Gastrotropin (FABP6).